A 215-amino-acid chain; its full sequence is Thiamine import ATP-binding protein ThiQ (215 aa).

The ABC transporter domain occupies 2–215 (IYLNNVILND…GQISQLQKGV (214 aa)). 32-39 (GESGAGKS) serves as a coordination point for ATP.

Belongs to the ABC transporter superfamily. Thiamine importer (TC 3.A.1.19.1) family. In terms of assembly, the complex is composed of two ATP-binding proteins (ThiQ), two transmembrane proteins (ThiP) and a solute-binding protein (ThiB).

It is found in the cell inner membrane. The enzyme catalyses thiamine(out) + ATP + H2O = thiamine(in) + ADP + phosphate + H(+). Functionally, part of the ABC transporter complex ThiBPQ involved in thiamine import. Responsible for energy coupling to the transport system. The sequence is that of Thiamine import ATP-binding protein ThiQ from Haemophilus influenzae (strain 86-028NP).